We begin with the raw amino-acid sequence, 333 residues long: UPF0284 protein TGAM_0534 (333 aa).

It belongs to the UPF0284 family.

The protein is UPF0284 protein TGAM_0534 of Thermococcus gammatolerans (strain DSM 15229 / JCM 11827 / EJ3).